A 461-amino-acid polypeptide reads, in one-letter code: tRNA modification GTPase MnmE (461 aa).

Residues R21, E87, and K126 each contribute to the (6S)-5-formyl-5,6,7,8-tetrahydrofolate site. A TrmE-type G domain is found at 222 to 384 (QSTVVLYGEP…LLELLKSKLT (163 aa)). N232 contacts K(+). Residues 232–237 (NTGKSS), 251–257 (SDVPGTT), and 276–279 (DTAG) each bind GTP. S236 is a binding site for Mg(2+). S251, V253, and T256 together coordinate K(+). Residue T257 participates in Mg(2+) binding. K461 lines the (6S)-5-formyl-5,6,7,8-tetrahydrofolate pocket.

This sequence belongs to the TRAFAC class TrmE-Era-EngA-EngB-Septin-like GTPase superfamily. TrmE GTPase family. As to quaternary structure, homodimer. Heterotetramer of two MnmE and two MnmG subunits. K(+) is required as a cofactor.

It is found in the cytoplasm. Exhibits a very high intrinsic GTPase hydrolysis rate. Involved in the addition of a carboxymethylaminomethyl (cmnm) group at the wobble position (U34) of certain tRNAs, forming tRNA-cmnm(5)s(2)U34. The protein is tRNA modification GTPase MnmE of Leptospira biflexa serovar Patoc (strain Patoc 1 / Ames).